A 206-amino-acid polypeptide reads, in one-letter code: Ribosomal RNA large subunit methyltransferase E (206 aa).

5 residues coordinate S-adenosyl-L-methionine: glycine 60, tryptophan 62, aspartate 80, aspartate 96, and aspartate 121. Lysine 161 serves as the catalytic Proton acceptor.

It belongs to the class I-like SAM-binding methyltransferase superfamily. RNA methyltransferase RlmE family.

The protein resides in the cytoplasm. The enzyme catalyses uridine(2552) in 23S rRNA + S-adenosyl-L-methionine = 2'-O-methyluridine(2552) in 23S rRNA + S-adenosyl-L-homocysteine + H(+). In terms of biological role, specifically methylates the uridine in position 2552 of 23S rRNA at the 2'-O position of the ribose in the fully assembled 50S ribosomal subunit. The sequence is that of Ribosomal RNA large subunit methyltransferase E from Nitrosospira multiformis (strain ATCC 25196 / NCIMB 11849 / C 71).